The sequence spans 320 residues: Ferrochelatase (320 aa).

Fe cation contacts are provided by histidine 194 and glutamate 275.

It belongs to the ferrochelatase family. As to quaternary structure, monomer.

Its subcellular location is the cytoplasm. It catalyses the reaction heme b + 2 H(+) = protoporphyrin IX + Fe(2+). The protein operates within porphyrin-containing compound metabolism; protoheme biosynthesis; protoheme from protoporphyrin-IX: step 1/1. Functionally, catalyzes the ferrous insertion into protoporphyrin IX. In Shigella sonnei (strain Ss046), this protein is Ferrochelatase.